A 166-amino-acid chain; its full sequence is MDHGFYPTNLNGEGLRIGIVQARFNEPVCEALREACVAELEQLGVAGEDVLLVTVPGALEVPLALQKMAESGQFDALIALGAVIRGETYHFELVSNESGAGITRVGLDFNIAIANGILTTDTDAQAHARTREKGRDCARTAVEMANLTNDLDGLQDHGQDDDGENE.

5-amino-6-(D-ribitylamino)uracil is bound by residues Phe-24, 58 to 60 (ALE), and 82 to 84 (AVI). 87–88 (ET) provides a ligand contact to (2S)-2-hydroxy-3-oxobutyl phosphate. His-90 functions as the Proton donor in the catalytic mechanism. Asn-115 lines the 5-amino-6-(D-ribitylamino)uracil pocket. Arg-129 is a (2S)-2-hydroxy-3-oxobutyl phosphate binding site.

It belongs to the DMRL synthase family.

The enzyme catalyses (2S)-2-hydroxy-3-oxobutyl phosphate + 5-amino-6-(D-ribitylamino)uracil = 6,7-dimethyl-8-(1-D-ribityl)lumazine + phosphate + 2 H2O + H(+). Its pathway is cofactor biosynthesis; riboflavin biosynthesis; riboflavin from 2-hydroxy-3-oxobutyl phosphate and 5-amino-6-(D-ribitylamino)uracil: step 1/2. In terms of biological role, catalyzes the formation of 6,7-dimethyl-8-ribityllumazine by condensation of 5-amino-6-(D-ribitylamino)uracil with 3,4-dihydroxy-2-butanone 4-phosphate. This is the penultimate step in the biosynthesis of riboflavin. This Ralstonia pickettii (strain 12J) protein is 6,7-dimethyl-8-ribityllumazine synthase.